The following is a 330-amino-acid chain: 2-methyl-6-phytyl-1,4-hydroquinone methyltransferase 1, chloroplastic (330 aa).

Residues Met1 to Lys45 constitute a chloroplast transit peptide. The Chloroplast intermembrane portion of the chain corresponds to Cys46 to Thr295. An SAM motif I region spans residues Val107–Phe116. The interval Val152–Pro165 is SAM motif II. The SAM motif III stretch occupies residues Arg193–Pro206. Residues Phe296–Tyr316 traverse the membrane as a helical segment. Residues Met317–Ile330 lie on the Stromal side of the membrane.

The protein belongs to the class I-like SAM-binding methyltransferase superfamily. MPBQ/MBSQ MT family.

Its subcellular location is the plastid. The protein resides in the chloroplast inner membrane. The catalysed reaction is 2-methyl-6-phytyl-1,4-benzene-1,4-diol + S-adenosyl-L-methionine = 2,3-dimethyl-6-phytylbenzene-1,4-diol + S-adenosyl-L-homocysteine + H(+). The enzyme catalyses 2-methyl-6-(all-trans-nonaprenyl)benzene-1,4-diol + S-adenosyl-L-methionine = plastoquinol-9 + S-adenosyl-L-homocysteine + H(+). It catalyses the reaction 6-geranylgeranyl-2-methylbenzene-1,4-diol + S-adenosyl-L-methionine = 6-geranylgeranyl-2,3-dimethylbenzene-1,4-diol + S-adenosyl-L-homocysteine + H(+). Its pathway is cofactor biosynthesis; tocopherol biosynthesis. Involved in a key methylation step in both tocopherols (vitamin E) and plastoquinone synthesis. Catalyzes the conversion of 2-methyl-6-phytyl-1,4-hydroquinone (MPBQ) to 2,3-dimethyl-6-phytyl-1,4-hydroquinone (DMPQ, a substrate for tocopherol cyclase), and 2-methyl-6-solanyl-1,4-benzoquinone (MSBQ) to plastoquinone. This is 2-methyl-6-phytyl-1,4-hydroquinone methyltransferase 1, chloroplastic (ARSM2) from Oryza sativa subsp. japonica (Rice).